A 259-amino-acid polypeptide reads, in one-letter code: MARIPKTLKFVVVIVAVLLPVLAYSATTARQEEVPQQTVAPQQQRHSFKGEECPAGSHRSEHTGACNPCTEGVDYTNASNNEPSCFPCTVCKSDQKHKSSCTMTRDTVCQCKEGTFRNENSPEMCRKCSRCPSGEVQVSNCTSWDDIQCVEEFGANATVETPAAEETMNTSPGTPAPAAEETMNTSPGTPAPAAEETMTTSPGTPAPAAEETMTTSPGTPAPAAEETMITSPGTPASSHYLSCTIVGIIVLIVLLIVFV.

Residues 1 to 25 (MARIPKTLKFVVVIVAVLLPVLAYS) form the signal peptide. TNFR-Cys repeat units follow at residues 29–66 (ARQEEVPQQTVAPQQQRHSFKGEECPAGSHRSEHTGAC), 69–109 (CTEG…DTVC), and 110–149 (QCKEGTFRNENSPEMCRKCSRCPSGEVQVSNCTSWDDIQC). Over residues 30-45 (RQEEVPQQTVAPQQQR) the composition is skewed to polar residues. Positions 30–56 (RQEEVPQQTVAPQQQRHSFKGEECPAG) are disordered. Cystine bridges form between C53–C66, C69–C85, C88–C101, C91–C109, C111–C125, C128–C141, and C131–C149. N77 is a glycosylation site (N-linked (GlcNAc...) (high mannose) asparagine). Residues N140 and N156 are each glycosylated (N-linked (GlcNAc...) (high mannose) asparagine). A disordered region spans residues 160-224 (ETPAAEETMN…TSPGTPAPAA (65 aa)). TAPE repeat units lie at residues 162–176 (PAAEETMNTSPGTPA), 177–191 (PAAEETMNTSPGTPA), 192–206 (PAAEETMTTSPGTPA), 207–221 (PAAEETMTTSPGTPA), and 222–236 (PAAEETMITSPGTPA). Positions 185–217 (TSPGTPAPAAEETMTTSPGTPAPAAEETMTTSP) are enriched in low complexity. The GPI-anchor amidated alanine moiety is linked to residue A236. Residues 237–259 (SSHYLSCTIVGIIVLIVLLIVFV) constitute a propeptide, removed in mature form.

N-glycosylated and O-glycosylated. Higher expression in normal tissues than in tumor cell lines. Highly expressed in peripheral blood lymphocytes, spleen, skeletal muscle, placenta, lung and heart.

It is found in the cell membrane. Receptor for the cytotoxic ligand TRAIL. Lacks a cytoplasmic death domain and hence is not capable of inducing apoptosis. May protect cells against TRAIL mediated apoptosis by competing with TRAIL-R1 and R2 for binding to the ligand. This is Tumor necrosis factor receptor superfamily member 10C (TNFRSF10C) from Homo sapiens (Human).